The sequence spans 178 residues: Caveolin-1 (178 aa).

At Ser-2 the chain carries N-acetylserine. Ser-2 bears the Phosphoserine mark. Positions 2-94 (SGGKYVDSEG…WKASFTTFTV (93 aa)) are required for homooligomerization. The Cytoplasmic portion of the chain corresponds to 2-104 (SGGKYVDSEG…TKYWFYRLLS (103 aa)). At Lys-5 the chain carries N6-acetyllysine; alternate. Residue Lys-5 forms a Glycyl lysine isopeptide (Lys-Gly) (interchain with G-Cter in ubiquitin); alternate linkage. Phosphotyrosine is present on Tyr-6. At Ser-9 the chain carries Phosphoserine. Tyr-14 is modified (phosphotyrosine; by ABL1). Residue Tyr-25 is modified to Phosphotyrosine. Residues Lys-26, Lys-30, Lys-39, Lys-47, and Lys-57 each participate in a glycyl lysine isopeptide (Lys-Gly) (interchain with G-Cter in ubiquitin) cross-link. An interaction with CAVIN3 region spans residues 82–94 (DGIWKASFTTFTV). Positions 105–125 (ALFGIPMALIWGIYFAILSFL) form an intramembrane region, helical. Residues 126 to 178 (HIWAVVPCIKSFLIEIQCISRVYSIYVHTFCDPLFEAIGKIFSNVRINLQKEI) are Cytoplasmic-facing. Residues 131 to 142 (VPCIKSFLIEIQ) are interacts with SPRY1, SPRY2, SPRY3 and SPRY4. 3 S-palmitoyl cysteine lipidation sites follow: Cys-133, Cys-143, and Cys-156. The segment at 149–160 (SIYVHTFCDPLF) is interacts with SPRY1, SPRY2, and SPRY4. Positions 167 to 178 (FSNVRINLQKEI) are interacts with SPRY1, SPRY2, SPRY3 and SPRY4.

It belongs to the caveolin family. As to quaternary structure, homooligomer. Interacts with GLIPR2. Interacts with NOSTRIN. Interacts with SNAP25 and STX1A. Interacts (via the N-terminus) with DPP4; the interaction is direct. Interacts with CTNNB1, CDH1 and JUP. Interacts with PACSIN2; this interaction induces membrane tubulation. Interacts with SLC7A9. Interacts with BMX and BTK. Interacts with TGFBR1. Interacts with CAVIN3 (via leucine-zipper domain) in a cholesterol-sensitive manner. Interacts with CAVIN1. Interacts with EHD2 in a cholesterol-dependent manner. Forms a ternary complex with UBXN6 and VCP; mediates CAV1 targeting to lysosomes for degradation. Interacts with ABCG1; this interaction regulates ABCG1-mediated cholesterol efflux. Interacts with NEU3; this interaction enhances NEU3 sialidase activity within caveola. Interacts (via C-terminus) with SPRY1, SPRY2 (via C-terminus), SPRY3, and SPRY4. Interacts with IGFBP5; this interaction allows trafficking of IGFBP5 from the plasma membrane to the nucleus. Post-translationally, phosphorylated at Tyr-14 by ABL1 in response to oxidative stress. Ubiquitinated. Undergo monoubiquitination and multi- and/or polyubiquitination. Monoubiquitination of N-terminal lysines promotes integration in a ternary complex with UBXN6 and VCP which promotes oligomeric CAV1 targeting to lysosomes for degradation. Ubiquitinated by ZNRF1; leading to degradation and modulation of the TLR4-mediated immune response.

The protein resides in the golgi apparatus membrane. Its subcellular location is the cell membrane. The protein localises to the membrane. It is found in the caveola. It localises to the membrane raft. May act as a scaffolding protein within caveolar membranes. Forms a stable heterooligomeric complex with CAV2 that targets to lipid rafts and drives caveolae formation. Mediates the recruitment of CAVIN proteins (CAVIN1/2/3/4) to the caveolae. Interacts directly with G-protein alpha subunits and can functionally regulate their activity. Involved in the costimulatory signal essential for T-cell receptor (TCR)-mediated T-cell activation. Its binding to DPP4 induces T-cell proliferation and NF-kappa-B activation in a T-cell receptor/CD3-dependent manner. Recruits CTNNB1 to caveolar membranes and may regulate CTNNB1-mediated signaling through the Wnt pathway. Negatively regulates TGFB1-mediated activation of SMAD2/3 by mediating the internalization of TGFBR1 from membrane rafts leading to its subsequent degradation. Binds 20(S)-hydroxycholesterol (20(S)-OHC). This chain is Caveolin-1 (CAV1), found in Equus caballus (Horse).